A 175-amino-acid chain; its full sequence is MEIDKNVDTLSEGQVDELIKKNIIMTSLEAVFNWARGNSLWPLSSGLACCAIEMMATGASRFDMARFGYEVFRPSPRQADLIIIAGTLTWKMAPAIQRVYEQMPEPKWIIAMGSCACTGGPFADSYAVVPGVDKVIPVDVYVPGCPPRPEALLDGFLKLKAKIQNPAKVGLKHGK.

[4Fe-4S] cluster is bound by residues C49, C50, C115, and C145.

This sequence belongs to the complex I 20 kDa subunit family. In terms of assembly, NDH-1 is composed of 14 different subunits. Subunits NuoB, C, D, E, F, and G constitute the peripheral sector of the complex. It depends on [4Fe-4S] cluster as a cofactor.

Its subcellular location is the cell membrane. It carries out the reaction a quinone + NADH + 5 H(+)(in) = a quinol + NAD(+) + 4 H(+)(out). Functionally, NDH-1 shuttles electrons from NADH, via FMN and iron-sulfur (Fe-S) centers, to quinones in the respiratory chain. The immediate electron acceptor for the enzyme in this species is believed to be a menaquinone. Couples the redox reaction to proton translocation (for every two electrons transferred, four hydrogen ions are translocated across the cytoplasmic membrane), and thus conserves the redox energy in a proton gradient. This is NADH-quinone oxidoreductase subunit B from Heliobacterium modesticaldum (strain ATCC 51547 / Ice1).